The chain runs to 479 residues: POU domain, class 2, transcription factor 2 (479 aa).

Disordered regions lie at residues 1–86 (MVHS…AQPH), 166–200 (TQAV…PSDL), 275–298 (SSLP…GRRR), 357–393 (PCSA…SQAS), and 409–479 (TLHP…PYQP). Positions 12–37 (RMSKPLEAEKQGLDSPSEHTDTERNG) are enriched in basic and acidic residues. A compositionally biased stretch (polar residues) spans 38-60 (PDTNHQNPQNKTSPFSVSPTGPS). Pro residues predominate over residues 76-85 (APLPPQPAQP). The 75-residue stretch at 195-269 (EEPSDLEELE…LLEKWLNDAE (75 aa)) folds into the POU-specific domain. Low complexity predominate over residues 275 to 288 (SSLPSPNQLSSPSL). Residues 297–356 (RRKKRTSIETNVRFALEKSFLANQKPTSEEILLIAEQLHMEKEVIRVWFCNRRQKEKRIN) constitute a DNA-binding region (homeobox). Residues 389-410 (LSQASSSLSTTVTTLSSAVGTL) are leucine-zipper. Positions 416-425 (AGGGGGGGGA) are enriched in gly residues.

The protein belongs to the POU transcription factor family. Class-2 subfamily. As to quaternary structure, interacts with NR3C1, AR and PGR. Interacts with POU2AF1; the interaction increases POU2F2 transactivation activity. As to expression, isoform 3 is B-cell specific. Isoform 5 is expressed in B-cells and the immunoglobulin-expressing T-cell line MOLT-4, but not in the T-cell line BW5147.

It is found in the cytoplasm. It localises to the nucleus. Its activity is regulated as follows. Transactivation activity is enhanced by transcriptional coactivator POU2AF1. Transcription factor that specifically binds to the octamer motif (5'-ATTTGCAT-3'). Regulates IL6 expression in B cells with POU2AF1. Regulates transcription in a number of tissues in addition to activating immunoglobulin gene expression. Modulates transcription transactivation by NR3C1, AR and PGR. Functionally, activates the U2 small nuclear RNA (snRNA) promoter. This Homo sapiens (Human) protein is POU domain, class 2, transcription factor 2.